The chain runs to 474 residues: Gamma-aminobutyric acid receptor subunit beta-2 (474 aa).

The N-terminal stretch at 1–25 is a signal peptide; sequence MWRVRKRGYFGIWSFPLIIAAVCAQ. Topologically, residues 26-244 are extracellular; that stretch reads SVNDPSNMSL…SFKLKRNIGY (219 aa). N-linked (GlcNAc...) asparagine glycans are attached at residues Asn32 and Asn104. Tyr121 is a binding site for histamine. An intrachain disulfide couples Cys160 to Cys174. Asn173 carries an N-linked (GlcNAc...) asparagine glycan. Histamine is bound by residues 180–181 and Thr226; that span reads SY. Residues Tyr181 and Thr226 each contribute to the 4-aminobutanoate site. The next 3 membrane-spanning stretches (helical) occupy residues 245-266, 270-292, and 304-326; these read FILQ…SFWI, ASAA…NTHL, and AIDM…YALV. Residues 327 to 451 lie on the Cytoplasmic side of the membrane; sequence NYIFFGRGPQ…DLTDVNAIDR (125 aa). A Phosphotyrosine modification is found at Tyr403. The chain crosses the membrane as a helical span at residues 452–473; the sequence is WSRIFFPVVFSFFNIVYWLYYV.

The protein belongs to the ligand-gated ion channel (TC 1.A.9) family. Gamma-aminobutyric acid receptor (TC 1.A.9.5) subfamily. GABRB2 sub-subfamily. Heteropentamer, formed by a combination of alpha (GABRA1-6), beta (GABRB1-3), gamma (GABRG1-3), delta (GABRD), epsilon (GABRE), rho (GABRR1-3), pi (GABRP) and theta (GABRQ) chains, each subunit exhibiting distinct physiological and pharmacological properties. Interacts with UBQLN1. May interact with KIF21B. Identified in a complex of 720 kDa composed of LHFPL4, NLGN2, GABRA1, GABRB2, GABRG2 and GABRB3. Glycosylated. As to expression, expressed in brain (at protein level), in cerebellar granule cells. Expressed in lungs, in alveolar epithelium.

Its subcellular location is the postsynaptic cell membrane. It is found in the cell membrane. It localises to the cytoplasmic vesicle membrane. It carries out the reaction chloride(in) = chloride(out). Allosterically activated by benzodiazepines and the anesthetic etomidate. Inhibited by the antagonist bicuculline. Potentiated by histamine. Functionally, beta subunit of the heteropentameric ligand-gated chloride channel gated by gamma-aminobutyric acid (GABA), a major inhibitory neurotransmitter in the brain. GABA-gated chloride channels, also named GABA(A) receptors (GABAAR), consist of five subunits arranged around a central pore and contain GABA active binding site(s) located at the alpha and beta subunit interface(s). When activated by GABA, GABAARs selectively allow the flow of chloride anions across the cell membrane down their electrochemical gradient. Chloride influx into the postsynaptic neuron following GABAAR opening decreases the neuron ability to generate a new action potential, thereby reducing nerve transmission. GABAARs containing alpha-1 and beta-2 or -3 subunits exhibit synaptogenic activity; the gamma-2 subunit being necessary but not sufficient to induce rapid synaptic contacts formation. Extrasynaptic beta-2 receptors contribute to the tonic GABAergic inhibition. Beta-containing GABAARs can simultaneously bind GABA and histamine where histamine binds at the interface of two neighboring beta subunits, which may be involved in the regulation of sleep and wakefulness. This chain is Gamma-aminobutyric acid receptor subunit beta-2, found in Rattus norvegicus (Rat).